Here is a 363-residue protein sequence, read N- to C-terminus: UDP-N-acetylglucosamine--N-acetylmuramyl-(pentapeptide) pyrophosphoryl-undecaprenol N-acetylglucosamine transferase (363 aa).

Residues 12 to 14, Ser196, and Gln291 each bind UDP-N-acetyl-alpha-D-glucosamine; that span reads TAG.

This sequence belongs to the glycosyltransferase 28 family. MurG subfamily.

Its subcellular location is the cell inner membrane. The enzyme catalyses di-trans,octa-cis-undecaprenyl diphospho-N-acetyl-alpha-D-muramoyl-L-alanyl-D-glutamyl-meso-2,6-diaminopimeloyl-D-alanyl-D-alanine + UDP-N-acetyl-alpha-D-glucosamine = di-trans,octa-cis-undecaprenyl diphospho-[N-acetyl-alpha-D-glucosaminyl-(1-&gt;4)]-N-acetyl-alpha-D-muramoyl-L-alanyl-D-glutamyl-meso-2,6-diaminopimeloyl-D-alanyl-D-alanine + UDP + H(+). Its pathway is cell wall biogenesis; peptidoglycan biosynthesis. Functionally, cell wall formation. Catalyzes the transfer of a GlcNAc subunit on undecaprenyl-pyrophosphoryl-MurNAc-pentapeptide (lipid intermediate I) to form undecaprenyl-pyrophosphoryl-MurNAc-(pentapeptide)GlcNAc (lipid intermediate II). This Legionella pneumophila (strain Corby) protein is UDP-N-acetylglucosamine--N-acetylmuramyl-(pentapeptide) pyrophosphoryl-undecaprenol N-acetylglucosamine transferase.